The following is a 288-amino-acid chain: NAD(P)H-hydrate epimerase (288 aa).

Residues M1–W47 constitute a mitochondrion transit peptide. Residue S49 is modified to Phosphoserine. One can recognise a YjeF N-terminal domain in the interval A65 to L275. A (6S)-NADPHX-binding site is contributed by N119–D123. N120 lines the K(+) pocket. Position 144 is an N6-succinyllysine (K144). Position 185 (D185) interacts with K(+). (6S)-NADPHX contacts are provided by residues G189 to D195 and D218. S221 lines the K(+) pocket.

It belongs to the NnrE/AIBP family. As to quaternary structure, homodimer. Interacts with APOA1 and APOA2. It depends on K(+) as a cofactor. Undergoes physiological phosphorylation during sperm capacitation, downstream to PKA activation. As to expression, ubiquitously expressed, with highest levels in kidney, heart and liver. Present in cerebrospinal fluid and urine but not in serum from healthy patients. Present in serum of sepsis patients (at protein level).

The protein localises to the mitochondrion. It is found in the secreted. The enzyme catalyses (6R)-NADHX = (6S)-NADHX. It carries out the reaction (6R)-NADPHX = (6S)-NADPHX. Its function is as follows. Catalyzes the epimerization of the S- and R-forms of NAD(P)HX, a damaged form of NAD(P)H that is a result of enzymatic or heat-dependent hydration. This is a prerequisite for the S-specific NAD(P)H-hydrate dehydratase to allow the repair of both epimers of NAD(P)HX. Accelerates cholesterol efflux from endothelial cells to high-density lipoprotein (HDL) and thereby regulates angiogenesis. The polypeptide is NAD(P)H-hydrate epimerase (Homo sapiens (Human)).